A 175-amino-acid chain; its full sequence is MTRYDDLPYRTCVGMMLLNAEGLVFIGRRLGGIEHVDETHVWQMPQGGVDPGEDPWTAAKRELYEETSVRSVEKLGEIADWLIYDIPRTVAGRSWKGRYRGQRQKWYAVRFTGDDSEIDVVSPGGGHKAEFISWRWEPMQNLPDLIVPFKRPVYERVVKEFAALAKDAAKVSGGG.

Positions 8 to 159 (PYRTCVGMML…KRPVYERVVK (152 aa)) constitute a Nudix hydrolase domain. Positions 47–68 (GGVDPGEDPWTAAKRELYEETS) match the Nudix box motif.

It belongs to the Nudix hydrolase family. RppH subfamily. The cofactor is a divalent metal cation.

In terms of biological role, accelerates the degradation of transcripts by removing pyrophosphate from the 5'-end of triphosphorylated RNA, leading to a more labile monophosphorylated state that can stimulate subsequent ribonuclease cleavage. The chain is RNA pyrophosphohydrolase from Rhodopseudomonas palustris (strain BisB18).